A 424-amino-acid polypeptide reads, in one-letter code: GTPase Obg (424 aa).

Positions 1 to 160 constitute an Obg domain; it reads MFDRVEIRIK…YELILELKLI (160 aa). In terms of domain architecture, OBG-type G spans 161-328; that stretch reads ADVAIIGYPN…LLDKVAEKLA (168 aa). GTP contacts are provided by residues 167 to 174, 192 to 196, 213 to 216, 280 to 283, and 309 to 311; these read GYPNVGKS, FTTLS, EVPG, NKID, and SAL. Mg(2+) contacts are provided by Ser174 and Thr194. The OCT domain occupies 349–424; that stretch reads PAPKGKMGFH…IITGRLEWYL (76 aa).

This sequence belongs to the TRAFAC class OBG-HflX-like GTPase superfamily. OBG GTPase family. In terms of assembly, monomer. The cofactor is Mg(2+).

It is found in the cytoplasm. Functionally, an essential GTPase which binds GTP, GDP and possibly (p)ppGpp with moderate affinity, with high nucleotide exchange rates and a fairly low GTP hydrolysis rate. Plays a role in control of the cell cycle, stress response, ribosome biogenesis and in those bacteria that undergo differentiation, in morphogenesis control. In Dehalococcoides mccartyi (strain ATCC BAA-2266 / KCTC 15142 / 195) (Dehalococcoides ethenogenes (strain 195)), this protein is GTPase Obg.